The following is a 601-amino-acid chain: DNA mismatch repair protein MutL (601 aa).

This sequence belongs to the DNA mismatch repair MutL/HexB family.

Functionally, this protein is involved in the repair of mismatches in DNA. It is required for dam-dependent methyl-directed DNA mismatch repair. May act as a 'molecular matchmaker', a protein that promotes the formation of a stable complex between two or more DNA-binding proteins in an ATP-dependent manner without itself being part of a final effector complex. This Listeria monocytogenes serovar 1/2a (strain ATCC BAA-679 / EGD-e) protein is DNA mismatch repair protein MutL.